We begin with the raw amino-acid sequence, 103 residues long: Phosphoribosyl-ATP pyrophosphatase (103 aa).

It belongs to the PRA-PH family.

It is found in the cytoplasm. The catalysed reaction is 1-(5-phospho-beta-D-ribosyl)-ATP + H2O = 1-(5-phospho-beta-D-ribosyl)-5'-AMP + diphosphate + H(+). It functions in the pathway amino-acid biosynthesis; L-histidine biosynthesis; L-histidine from 5-phospho-alpha-D-ribose 1-diphosphate: step 2/9. In Listeria monocytogenes serotype 4b (strain CLIP80459), this protein is Phosphoribosyl-ATP pyrophosphatase.